The primary structure comprises 185 residues: Ribonuclease HII (185 aa).

One can recognise an RNase H type-2 domain in the interval 1–185; the sequence is MKICGIDEAG…LKHLQGILEF (185 aa). The a divalent metal cation site is built by Asp7, Glu8, and Asp96.

It belongs to the RNase HII family. It depends on Mn(2+) as a cofactor. Requires Mg(2+) as cofactor.

The protein localises to the cytoplasm. It carries out the reaction Endonucleolytic cleavage to 5'-phosphomonoester.. Endonuclease that specifically degrades the RNA of RNA-DNA hybrids. The protein is Ribonuclease HII of Campylobacter hominis (strain ATCC BAA-381 / DSM 21671 / CCUG 45161 / LMG 19568 / NCTC 13146 / CH001A).